Here is a 1064-residue protein sequence, read N- to C-terminus: Carbamoyl phosphate synthase pyrimidine-specific large chain (1064 aa).

Positions 1–401 are carboxyphosphate synthetic domain; sequence MPKRRDIETI…SLLKAVRSLE (401 aa). R129, R169, G175, G176, R208, I210, G241, I242, H243, Q284, and E298 together coordinate ATP. The ATP-grasp 1 domain occupies 133-327; that stretch reads RALMNELGEP…IAKLAAKIAV (195 aa). Q284, E298, and N300 together coordinate Mg(2+). Residues Q284, E298, and N300 each coordinate Mn(2+). Residues 402–546 form an oligomerization domain region; it reads IGVHHLELNE…YSTYEEENES (145 aa). Residues 547 to 929 form a carbamoyl phosphate synthetic domain region; that stretch reads IVTEKPSVIV…ALYKGLVASG (383 aa). An ATP-grasp 2 domain is found at 671–861; it reads EQALSELGIP…MANLATKAIL (191 aa). 10 residues coordinate ATP: R707, R746, I748, E752, G777, V778, H779, S780, Q820, and E832. 3 residues coordinate Mg(2+): Q820, E832, and N834. Mn(2+) is bound by residues Q820, E832, and N834. The region spanning 930–1064 is the MGS-like domain; that stretch reads IQIQPHGAVL…TAMTEGLVRS (135 aa). The tract at residues 930–1064 is allosteric domain; that stretch reads IQIQPHGAVL…TAMTEGLVRS (135 aa).

This sequence belongs to the CarB family. As to quaternary structure, composed of two chains; the small (or glutamine) chain promotes the hydrolysis of glutamine to ammonia, which is used by the large (or ammonia) chain to synthesize carbamoyl phosphate. Tetramer of heterodimers (alpha,beta)4. Mg(2+) is required as a cofactor. The cofactor is Mn(2+).

It catalyses the reaction hydrogencarbonate + L-glutamine + 2 ATP + H2O = carbamoyl phosphate + L-glutamate + 2 ADP + phosphate + 2 H(+). The catalysed reaction is hydrogencarbonate + NH4(+) + 2 ATP = carbamoyl phosphate + 2 ADP + phosphate + 2 H(+). Its pathway is amino-acid biosynthesis; L-arginine biosynthesis; carbamoyl phosphate from bicarbonate: step 1/1. The protein operates within pyrimidine metabolism; UMP biosynthesis via de novo pathway; (S)-dihydroorotate from bicarbonate: step 1/3. Functionally, small subunit of the glutamine-dependent carbamoyl phosphate synthetase (CPSase). CPSase catalyzes the formation of carbamoyl phosphate from the ammonia moiety of glutamine, carbonate, and phosphate donated by ATP, constituting the first step of the biosynthetic pathway leading to pyrimidine nucleotides. The large subunit (synthetase) binds the substrates ammonia (free or transferred from glutamine from the small subunit), hydrogencarbonate and ATP and carries out an ATP-coupled ligase reaction, activating hydrogencarbonate by forming carboxy phosphate which reacts with ammonia to form carbamoyl phosphate. This Geobacillus stearothermophilus (Bacillus stearothermophilus) protein is Carbamoyl phosphate synthase pyrimidine-specific large chain (pyrAB).